The following is a 497-amino-acid chain: Probable cytosol aminopeptidase (497 aa).

Mn(2+) is bound by residues K268 and D273. The active site involves K280. Mn(2+) is bound by residues D291, D350, and E352. R354 is an active-site residue.

Belongs to the peptidase M17 family. It depends on Mn(2+) as a cofactor.

Its subcellular location is the cytoplasm. The catalysed reaction is Release of an N-terminal amino acid, Xaa-|-Yaa-, in which Xaa is preferably Leu, but may be other amino acids including Pro although not Arg or Lys, and Yaa may be Pro. Amino acid amides and methyl esters are also readily hydrolyzed, but rates on arylamides are exceedingly low.. The enzyme catalyses Release of an N-terminal amino acid, preferentially leucine, but not glutamic or aspartic acids.. In terms of biological role, presumably involved in the processing and regular turnover of intracellular proteins. Catalyzes the removal of unsubstituted N-terminal amino acids from various peptides. The protein is Probable cytosol aminopeptidase of Alkalilimnicola ehrlichii (strain ATCC BAA-1101 / DSM 17681 / MLHE-1).